Consider the following 4134-residue polypeptide: DNA-dependent protein kinase catalytic subunit (4134 aa).

HEAT repeat units lie at residues Val900–Met937, Gln1000–Ser1036, and Ala1050–Phe1085. TPR repeat units follow at residues Tyr1265–His1305 and Pro1722–Pro1755. Ser2055 carries the phosphoserine; by autocatalysis modification. One copy of the TPR 3 repeat lies at Asp2207–Val2240. At Thr2609 the chain carries Phosphothreonine; by autocatalysis. Positions Ala2611 to Gly2629 are enriched in polar residues. The interval Ala2611–Val2631 is disordered. Ser2612 bears the Phosphoserine; by autocatalysis mark. 2 positions are modified to phosphothreonine; by autocatalysis: Thr2638 and Thr2647. The region spanning Asn2880–Ser3545 is the FAT domain. The PI3K/PI4K catalytic domain occupies Phe3728–Gly4059. The tract at residues Val3734–Lys3740 is G-loop. Residues Gly3925–Asn3933 are catalytic loop. The activation loop stretch occupies residues Gly3945–Thr3970. Residues Asp4102 to Met4134 enclose the FATC domain.

It belongs to the PI3/PI4-kinase family. In terms of assembly, DNA-PK is a heterotrimer of PRKDC and the Ku dimer (composed of XRCC6/Ku70 and XRCC5/Ku86). Component of the core long-range non-homologous end joining (NHEJ) complex (also named DNA-PK complex) composed of PRKDC, LIG4, XRCC4, XRCC6/Ku70, XRCC5/Ku86 and NHEJ1/XLF. Additional component of the NHEJ complex includes PAXX. Following autophosphorylation, PRKDC dissociates from DNA. Post-translationally, autophosphorylated at two clusters, the T2609 cluster and the S2056 cluster. Autophosphorylated on Ser-2055, Thr-2609, Thr-2638 and Thr-2647. Ser-2055 and Thr-2609 are DNA damage-inducible phosphorylation sites (inducible with ionizing radiation, IR) dephosphorylated by PPP5C. Autophosphorylation induces a conformational change that leads to remodeling of the DNA-PK complex, requisite for efficient end processing and DNA repair. Autophosphorylation in trans within DNA-PK complexes loaded on DNA ends leads to the dissociation of PRKDC from DNA and the transition into the short-range NHEJ complex. Autophosphorylation of the T2609 cluster is required for hematopoietic development and protein synthesis in erythrocytes precursors.

The protein resides in the nucleus. Its subcellular location is the nucleolus. It carries out the reaction L-seryl-[protein] + ATP = O-phospho-L-seryl-[protein] + ADP + H(+). The catalysed reaction is L-threonyl-[protein] + ATP = O-phospho-L-threonyl-[protein] + ADP + H(+). Its function is as follows. Serine/threonine-protein kinase that acts as a molecular sensor for DNA damage. Involved in DNA nonhomologous end joining (NHEJ) required for double-strand break (DSB) repair and V(D)J recombination. Must be bound to DNA to express its catalytic properties. Promotes processing of hairpin DNA structures in V(D)J recombination by activation of the hairpin endonuclease artemis (DCLRE1C). Recruited by XRCC5 and XRCC6 to DNA ends and is required to (1) protect and align broken ends of DNA, thereby preventing their degradation, (2) and sequester the DSB for repair by NHEJ. Acts as a scaffold protein to aid the localization of DNA repair proteins to the site of damage. The assembly of the DNA-PK complex at DNA ends is also required for the NHEJ ligation step. Found at the ends of chromosomes, suggesting a further role in the maintenance of telomeric stability and the prevention of chromosomal end fusion. As part of the DNA-PK complex, involved in the early steps of ribosome assembly by promoting the processing of precursor rRNA into mature 18S rRNA in the small-subunit processome. Recognizes the substrate consensus sequence [ST]-Q. Phosphorylates 'Ser-139' of histone variant H2AX, thereby regulating DNA damage response mechanism. The chain is DNA-dependent protein kinase catalytic subunit (PRKDC) from Gallus gallus (Chicken).